A 546-amino-acid polypeptide reads, in one-letter code: Light-independent protochlorophyllide reductase subunit B (546 aa).

A [4Fe-4S] cluster-binding site is contributed by Asp-36. Asp-287 (proton donor) is an active-site residue. A substrate-binding site is contributed by 422-423 (GL). The interval 443 to 501 (PSHLSAHRPTGEAVGDAVGEPPAAPRDQAAPAATLDGSAAQSDPARTTPPGAPSWEDSA) is disordered.

This sequence belongs to the ChlB/BchB/BchZ family. As to quaternary structure, protochlorophyllide reductase is composed of three subunits; BchL, BchN and BchB. Forms a heterotetramer of two BchB and two BchN subunits. Requires [4Fe-4S] cluster as cofactor.

It catalyses the reaction chlorophyllide a + oxidized 2[4Fe-4S]-[ferredoxin] + 2 ADP + 2 phosphate = protochlorophyllide a + reduced 2[4Fe-4S]-[ferredoxin] + 2 ATP + 2 H2O. It participates in porphyrin-containing compound metabolism; bacteriochlorophyll biosynthesis (light-independent). Component of the dark-operative protochlorophyllide reductase (DPOR) that uses Mg-ATP and reduced ferredoxin to reduce ring D of protochlorophyllide (Pchlide) to form chlorophyllide a (Chlide). This reaction is light-independent. The NB-protein (BchN-BchB) is the catalytic component of the complex. The sequence is that of Light-independent protochlorophyllide reductase subunit B from Rhodospirillum rubrum (strain ATCC 11170 / ATH 1.1.1 / DSM 467 / LMG 4362 / NCIMB 8255 / S1).